Consider the following 307-residue polypeptide: Glutaminase (307 aa).

Substrate contacts are provided by Ser-66, Asn-116, Glu-160, Asn-167, Tyr-191, Tyr-243, and Val-261.

Belongs to the glutaminase family. In terms of assembly, homotetramer.

It catalyses the reaction L-glutamine + H2O = L-glutamate + NH4(+). In Saccharophagus degradans (strain 2-40 / ATCC 43961 / DSM 17024), this protein is Glutaminase.